Consider the following 248-residue polypeptide: Probable transcriptional regulatory protein PSPA7_4544 (248 aa).

It belongs to the TACO1 family.

It is found in the cytoplasm. This chain is Probable transcriptional regulatory protein PSPA7_4544, found in Pseudomonas paraeruginosa (strain DSM 24068 / PA7) (Pseudomonas aeruginosa (strain PA7)).